A 498-amino-acid chain; its full sequence is ATP synthase subunit beta, chloroplastic (498 aa).

Polar residues predominate over residues 1 to 14 (MRTNPTTSRPGVST). The tract at residues 1–20 (MRTNPTTSRPGVSTSEEKST) is disordered. ATP is bound at residue 172-179 (GGAGVGKT).

The protein belongs to the ATPase alpha/beta chains family. F-type ATPases have 2 components, CF(1) - the catalytic core - and CF(0) - the membrane proton channel. CF(1) has five subunits: alpha(3), beta(3), gamma(1), delta(1), epsilon(1). CF(0) has four main subunits: a(1), b(1), b'(1) and c(9-12).

Its subcellular location is the plastid. The protein localises to the chloroplast thylakoid membrane. The enzyme catalyses ATP + H2O + 4 H(+)(in) = ADP + phosphate + 5 H(+)(out). Functionally, produces ATP from ADP in the presence of a proton gradient across the membrane. The catalytic sites are hosted primarily by the beta subunits. The sequence is that of ATP synthase subunit beta, chloroplastic from Hordeum vulgare (Barley).